The primary structure comprises 248 residues: Stress-related protein (248 aa).

This sequence belongs to the REF/SRPP family.

The chain is Stress-related protein (SRP) from Vitis riparia (Frost grape).